A 262-amino-acid chain; its full sequence is Proteasome subunit alpha (262 aa).

Residues 235-262 (LLPTTGESDAGDSGADGSPSGDSPDTSA) form a disordered region.

This sequence belongs to the peptidase T1A family. In terms of assembly, the 20S proteasome core is composed of 14 alpha and 14 beta subunits that assemble into four stacked heptameric rings, resulting in a barrel-shaped structure. The two inner rings, each composed of seven catalytic beta subunits, are sandwiched by two outer rings, each composed of seven alpha subunits. The catalytic chamber with the active sites is on the inside of the barrel. Has a gated structure, the ends of the cylinder being occluded by the N-termini of the alpha-subunits. Is capped by the proteasome-associated ATPase, ARC.

The protein localises to the cytoplasm. Its pathway is protein degradation; proteasomal Pup-dependent pathway. With respect to regulation, the formation of the proteasomal ATPase ARC-20S proteasome complex, likely via the docking of the C-termini of ARC into the intersubunit pockets in the alpha-rings, may trigger opening of the gate for substrate entry. Interconversion between the open-gate and close-gate conformations leads to a dynamic regulation of the 20S proteasome proteolysis activity. In terms of biological role, component of the proteasome core, a large protease complex with broad specificity involved in protein degradation. In Gordonia bronchialis (strain ATCC 25592 / DSM 43247 / BCRC 13721 / JCM 3198 / KCTC 3076 / NBRC 16047 / NCTC 10667) (Rhodococcus bronchialis), this protein is Proteasome subunit alpha.